Consider the following 381-residue polypeptide: Glycerol-3-phosphate dehydrogenase [NAD(+)] (381 aa).

The interval 1–27 (MTAMDRLDHVSNQLAAKRQKKNPEGKP) is disordered. NAD(+) is bound by residues 34–39 (GSGNWG), Phe-66, and Phe-122. Lys-145 is a binding site for substrate. Residue Ala-178 participates in NAD(+) binding. Lys-238 serves as the catalytic Proton acceptor. NAD(+)-binding residues include Arg-303 and Gln-332. A substrate-binding site is contributed by 303 to 304 (RN).

It belongs to the NAD-dependent glycerol-3-phosphate dehydrogenase family.

It catalyses the reaction sn-glycerol 3-phosphate + NAD(+) = dihydroxyacetone phosphate + NADH + H(+). The chain is Glycerol-3-phosphate dehydrogenase [NAD(+)] (GPD) from Pichia angusta (Yeast).